A 156-amino-acid chain; its full sequence is Keratin-associated protein 13-4 (156 aa).

4 consecutive repeat copies span residues 37–46, 47–56, 57–66, and 73–82. Residues 37-82 form a 4 X 10 AA approximate repeats region; the sequence is CQLGSSLYRNCQKTCWEPTSCRKSCYRRRTSMLCSPCQTTCSRSLG.

Belongs to the PMG family. As to quaternary structure, interacts with hair keratins.

In terms of biological role, in the hair cortex, hair keratin intermediate filaments are embedded in an interfilamentous matrix, consisting of hair keratin-associated proteins (KRTAP), which are essential for the formation of a rigid and resistant hair shaft through their extensive disulfide bond cross-linking with abundant cysteine residues of hair keratins. The matrix proteins include the high-sulfur and high-glycine-tyrosine keratins. The protein is Keratin-associated protein 13-4 (KRTAP13-4) of Macaca fascicularis (Crab-eating macaque).